Reading from the N-terminus, the 154-residue chain is Large ribosomal subunit protein uL13 (154 aa).

The protein belongs to the universal ribosomal protein uL13 family. Part of the 50S ribosomal subunit.

Its function is as follows. This protein is one of the early assembly proteins of the 50S ribosomal subunit, although it is not seen to bind rRNA by itself. It is important during the early stages of 50S assembly. This chain is Large ribosomal subunit protein uL13, found in Bartonella henselae (strain ATCC 49882 / DSM 28221 / CCUG 30454 / Houston 1) (Rochalimaea henselae).